We begin with the raw amino-acid sequence, 309 residues long: Probable manganese-dependent inorganic pyrophosphatase (309 aa).

The Mn(2+) site is built by His9, Asp13, Asp15, Asp75, His97, and Asp149.

It belongs to the PPase class C family. It depends on Mn(2+) as a cofactor.

The protein resides in the cytoplasm. It carries out the reaction diphosphate + H2O = 2 phosphate + H(+). This is Probable manganese-dependent inorganic pyrophosphatase from Bacillus cereus (strain 03BB102).